Reading from the N-terminus, the 302-residue chain is Eukaryotic translation initiation factor 3 subunit F (302 aa).

One can recognise an MPN domain in the interval 23–165; it reads IVIEPAVLFS…IKTYVSSPVG (143 aa). Serine 162 is modified (phosphoserine).

The protein belongs to the eIF-3 subunit F family. Component of the eukaryotic translation initiation factor 3 (eIF-3) complex. The eIF-3 complex appears to include tif32/eif3a, SPAC25G10.08/eif3b, tif33/eif3c, SPBC4C3.07/eif3f, tif35/eif3g and sum1/eif3i. This set of common subunits may also associate exclusively with either moe1/eif3d and int6/eif3e, or with SPAC821.05/eif3h and SPAC1751.03/eif3m. The eIF-3 complex may also include SPAC3A12.13c/eif3j.

It is found in the cytoplasm. In terms of biological role, component of the eukaryotic translation initiation factor 3 (eIF-3) complex, which is involved in protein synthesis of a specialized repertoire of mRNAs and, together with other initiation factors, stimulates binding of mRNA and methionyl-tRNAi to the 40S ribosome. The eIF-3 complex specifically targets and initiates translation of a subset of mRNAs involved in cell proliferation. This chain is Eukaryotic translation initiation factor 3 subunit F, found in Schizosaccharomyces pombe (strain 972 / ATCC 24843) (Fission yeast).